We begin with the raw amino-acid sequence, 340 residues long: Glycerol-3-phosphate dehydrogenase [NAD(P)+] (340 aa).

Positions 14, 15, 35, and 108 each coordinate NADPH. Residues Lys108 and Gly136 each coordinate sn-glycerol 3-phosphate. Ala140 is an NADPH binding site. Sn-glycerol 3-phosphate contacts are provided by Lys191, Asp244, Ser254, Arg255, and Asn256. Residue Lys191 is the Proton acceptor of the active site. Arg255 is a binding site for NADPH. 2 residues coordinate NADPH: Val279 and Glu281.

The protein belongs to the NAD-dependent glycerol-3-phosphate dehydrogenase family.

The protein resides in the cytoplasm. The catalysed reaction is sn-glycerol 3-phosphate + NAD(+) = dihydroxyacetone phosphate + NADH + H(+). It catalyses the reaction sn-glycerol 3-phosphate + NADP(+) = dihydroxyacetone phosphate + NADPH + H(+). It participates in membrane lipid metabolism; glycerophospholipid metabolism. In terms of biological role, catalyzes the reduction of the glycolytic intermediate dihydroxyacetone phosphate (DHAP) to sn-glycerol 3-phosphate (G3P), the key precursor for phospholipid synthesis. This chain is Glycerol-3-phosphate dehydrogenase [NAD(P)+], found in Azotobacter vinelandii (strain DJ / ATCC BAA-1303).